The chain runs to 147 residues: Hemoglobin anodic subunit beta (147 aa).

The Globin domain occupies 2–147 (EWTEDERTAI…VTSALARQYH (146 aa)). Residues His63 and His92 each coordinate heme b.

This sequence belongs to the globin family. As to quaternary structure, heterotetramer of two alpha chains and two beta chains. In terms of tissue distribution, red blood cells.

In terms of biological role, involved in oxygen transport from gills to the various peripheral tissues. This is Hemoglobin anodic subunit beta (hbb1) from Anguilla anguilla (European freshwater eel).